Consider the following 317-residue polypeptide: DNA-directed RNA polymerase subunit alpha (317 aa).

An alpha N-terminal domain (alpha-NTD) region spans residues 1-234 (MKQFNKPEFG…SHFDVFTTLA (234 aa)). Residues 249–317 (EEKELDKPVE…AALELTFKQN (69 aa)) are alpha C-terminal domain (alpha-CTD).

It belongs to the RNA polymerase alpha chain family. In terms of assembly, homodimer. The RNAP catalytic core consists of 2 alpha, 1 beta, 1 beta' and 1 omega subunit. When a sigma factor is associated with the core the holoenzyme is formed, which can initiate transcription.

The catalysed reaction is RNA(n) + a ribonucleoside 5'-triphosphate = RNA(n+1) + diphosphate. In terms of biological role, DNA-dependent RNA polymerase catalyzes the transcription of DNA into RNA using the four ribonucleoside triphosphates as substrates. This is DNA-directed RNA polymerase subunit alpha from Mesoplasma florum (strain ATCC 33453 / NBRC 100688 / NCTC 11704 / L1) (Acholeplasma florum).